A 95-amino-acid chain; its full sequence is Large ribosomal subunit protein uL23 (95 aa).

It belongs to the universal ribosomal protein uL23 family. As to quaternary structure, part of the 50S ribosomal subunit. Contacts protein L29, and trigger factor when it is bound to the ribosome.

In terms of biological role, one of the early assembly proteins it binds 23S rRNA. One of the proteins that surrounds the polypeptide exit tunnel on the outside of the ribosome. Forms the main docking site for trigger factor binding to the ribosome. This chain is Large ribosomal subunit protein uL23, found in Levilactobacillus brevis (strain ATCC 367 / BCRC 12310 / CIP 105137 / JCM 1170 / LMG 11437 / NCIMB 947 / NCTC 947) (Lactobacillus brevis).